We begin with the raw amino-acid sequence, 120 residues long: NAD(P)H-quinone oxidoreductase subunit 3 (120 aa).

3 helical membrane passes run Gly6–Val26, Met64–Val84, and Leu89–Ala109.

The protein belongs to the complex I subunit 3 family. In terms of assembly, NDH-1 can be composed of about 15 different subunits; different subcomplexes with different compositions have been identified which probably have different functions.

It is found in the cellular thylakoid membrane. It catalyses the reaction a plastoquinone + NADH + (n+1) H(+)(in) = a plastoquinol + NAD(+) + n H(+)(out). The enzyme catalyses a plastoquinone + NADPH + (n+1) H(+)(in) = a plastoquinol + NADP(+) + n H(+)(out). Functionally, NDH-1 shuttles electrons from an unknown electron donor, via FMN and iron-sulfur (Fe-S) centers, to quinones in the respiratory and/or the photosynthetic chain. The immediate electron acceptor for the enzyme in this species is believed to be plastoquinone. Couples the redox reaction to proton translocation, and thus conserves the redox energy in a proton gradient. Cyanobacterial NDH-1 also plays a role in inorganic carbon-concentration. This is NAD(P)H-quinone oxidoreductase subunit 3 from Synechococcus sp. (strain CC9605).